A 262-amino-acid polypeptide reads, in one-letter code: Calbindin (262 aa).

At Thr-2 the chain carries N-acetylthreonine. 5 EF-hand domains span residues 12 to 47 (ISAA…LQQA), 54 to 89 (DLTP…EENF), 99 to 134 (KSSE…LLQK), 143 to 178 (KLTE…QENF), and 187 to 222 (MCAK…LCEK). 5 residues coordinate Ca(2+): Asp-25, Asp-27, Asn-29, Tyr-31, and Glu-36. Residues Asp-112, Asp-114, Ser-116, Glu-123, Asp-156, Asn-158, Asp-160, Lys-162, Glu-167, Asp-200, Asp-202, Asn-204, Tyr-206, and Glu-211 each coordinate Ca(2+).

The protein belongs to the calbindin family. As to expression, highly abundant in supporting cells. Also present in hair cells.

Functionally, buffers cytosolic calcium. May stimulate a membrane Ca(2+)-ATPase and a 3',5'-cyclic nucleotide phosphodiesterase. This Gallus gallus (Chicken) protein is Calbindin (CALB1).